The sequence spans 381 residues: Creatine kinase B-type (381 aa).

A Phosphoserine modification is found at S4. The Phosphagen kinase N-terminal domain occupies K11–G98. Residue T35 is modified to Phosphothreonine. Residue K45 forms a Glycyl lysine isopeptide (Lys-Gly) (interchain with G-Cter in ubiquitin) linkage. V72 is a binding site for creatine. A compositionally biased stretch (basic and acidic residues) spans R96–L110. Residues R96 to P123 are disordered. Glycyl lysine isopeptide (Lys-Gly) (interchain with G-Cter in ubiquitin) cross-links involve residues K101 and K107. Y125 is subject to Phosphotyrosine. The region spanning Y125–L367 is the Phosphagen kinase C-terminal domain. Residues S128–R132, R130, R132, and H191 contribute to the ATP site. The internal MTS-like signal stretch occupies residues R130–R138. Phosphoserine is present on S199. Residue E232 participates in creatine binding. R236 lines the ATP pocket. Y269 carries the 3'-nitrotyrosine modification. Residue S285 coordinates creatine. ATP is bound at residue R292. S309 carries the phosphoserine modification. ATP is bound by residues R320, R320 to V325, and D335. Residue T322 is modified to Phosphothreonine. K381 is covalently cross-linked (Glycyl lysine isopeptide (Lys-Gly) (interchain with G-Cter in ubiquitin)).

It belongs to the ATP:guanido phosphotransferase family. As to quaternary structure, dimer of identical or non-identical chains, which can be either B (brain type) or M (muscle type). With MM being the major form in skeletal muscle and myocardium, MB existing in myocardium, and BB existing in many tissues, especially brain. Interacts with SLC12A6 (via C-terminus); the interaction may be required for SLC12A6 potassium-chloride cotransport activity. In terms of processing, ubiquitinated by the ECS(ASB9) complex, leading to its degradation by the proteasome.

The protein localises to the cytoplasm. It is found in the cytosol. The protein resides in the mitochondrion. It localises to the cell membrane. The enzyme catalyses creatine + ATP = N-phosphocreatine + ADP + H(+). Reversibly catalyzes the transfer of phosphate between ATP and various phosphogens (e.g. creatine phosphate). Creatine kinase isoenzymes play a central role in energy transduction in tissues with large, fluctuating energy demands, such as skeletal muscle, heart, brain and spermatozoa. Acts as a key regulator of adaptive thermogenesis as part of the futile creatine cycle: localizes to the mitochondria of thermogenic fat cells and acts by mediating phosphorylation of creatine to initiate a futile cycle of creatine phosphorylation and dephosphorylation. During the futile creatine cycle, creatine and N-phosphocreatine are in a futile cycle, which dissipates the high energy charge of N-phosphocreatine as heat without performing any mechanical or chemical work. The sequence is that of Creatine kinase B-type (CKB) from Oryctolagus cuniculus (Rabbit).